Reading from the N-terminus, the 241-residue chain is Ribonuclease PH (241 aa).

Residues Arg87 and 125–127 contribute to the phosphate site; that span reads GTR.

This sequence belongs to the RNase PH family. As to quaternary structure, homohexameric ring arranged as a trimer of dimers.

The enzyme catalyses tRNA(n+1) + phosphate = tRNA(n) + a ribonucleoside 5'-diphosphate. Functionally, phosphorolytic 3'-5' exoribonuclease that plays an important role in tRNA 3'-end maturation. Removes nucleotide residues following the 3'-CCA terminus of tRNAs; can also add nucleotides to the ends of RNA molecules by using nucleoside diphosphates as substrates, but this may not be physiologically important. Probably plays a role in initiation of 16S rRNA degradation (leading to ribosome degradation) during starvation. This is Ribonuclease PH from Nitrosomonas europaea (strain ATCC 19718 / CIP 103999 / KCTC 2705 / NBRC 14298).